Consider the following 487-residue polypeptide: Probable Xaa-Pro aminopeptidase CPSG_02684 (487 aa).

Positions 1–10 are enriched in polar residues; that stretch reads MAGSNTLSSS. The segment at 1-22 is disordered; it reads MAGSNTLSSSEHGDDPRGHSYS. 4 residues coordinate Mn(2+): aspartate 275, aspartate 286, glutamate 421, and glutamate 460.

This sequence belongs to the peptidase M24B family. The cofactor is Mn(2+).

The enzyme catalyses Release of any N-terminal amino acid, including proline, that is linked to proline, even from a dipeptide or tripeptide.. Catalyzes the removal of a penultimate prolyl residue from the N-termini of peptides. The sequence is that of Probable Xaa-Pro aminopeptidase CPSG_02684 from Coccidioides posadasii (strain RMSCC 757 / Silveira) (Valley fever fungus).